The following is a 102-amino-acid chain: Putative nuclear receptor corepressor 1-like protein NCOR1P1 (102 aa).

Over residues 1-18 the composition is skewed to polar residues; it reads MSSSGYPPNQGAFSTEQS. A disordered region spans residues 1–68; the sequence is MSSSGYPPNQ…DQNASPSKLS (68 aa). A coiled-coil region spans residues 68–100; that stretch reads SKEELIECMDRVDREIAKVEQQILKLKKKQVKV.

Belongs to the N-CoR nuclear receptor corepressors family.

This chain is Putative nuclear receptor corepressor 1-like protein NCOR1P1 (NCOR1P1), found in Homo sapiens (Human).